A 117-amino-acid chain; its full sequence is Large ribosomal subunit protein bL20 (117 aa).

It belongs to the bacterial ribosomal protein bL20 family.

Binds directly to 23S ribosomal RNA and is necessary for the in vitro assembly process of the 50S ribosomal subunit. It is not involved in the protein synthesizing functions of that subunit. In Nitratidesulfovibrio vulgaris (strain DSM 19637 / Miyazaki F) (Desulfovibrio vulgaris), this protein is Large ribosomal subunit protein bL20.